The primary structure comprises 125 residues: NADH dehydrogenase [ubiquinone] 1 beta subcomplex subunit 8, mitochondrial (125 aa).

The transit peptide at 1 to 29 (MAGRLSGVASRIMGGNGVVARSVGSSLRQ) directs the protein to the mitochondrion. A helical transmembrane segment spans residues 78–98 (ALAWLSGGLGFFVGLGLLAVL).

The protein belongs to the complex I NDUFB8 subunit family. Complex I is composed of at least 49 different subunits.

It is found in the mitochondrion inner membrane. Accessory subunit of the mitochondrial membrane respiratory chain NADH dehydrogenase (Complex I), that is believed not to be involved in catalysis. Complex I functions in the transfer of electrons from NADH to the respiratory chain. The immediate electron acceptor for the enzyme is believed to be ubiquinone. This is NADH dehydrogenase [ubiquinone] 1 beta subcomplex subunit 8, mitochondrial from Arabidopsis thaliana (Mouse-ear cress).